The primary structure comprises 131 residues: NADPH-dependent 7-cyano-7-deazaguanine reductase (131 aa).

Catalysis depends on C48, which acts as the Thioimide intermediate. The active-site Proton donor is D55. Substrate-binding positions include 70-72 (VEL) and 89-90 (QE).

The protein belongs to the GTP cyclohydrolase I family. QueF type 1 subfamily.

It localises to the cytoplasm. The catalysed reaction is 7-aminomethyl-7-carbaguanine + 2 NADP(+) = 7-cyano-7-deazaguanine + 2 NADPH + 3 H(+). The protein operates within tRNA modification; tRNA-queuosine biosynthesis. In terms of biological role, catalyzes the NADPH-dependent reduction of 7-cyano-7-deazaguanine (preQ0) to 7-aminomethyl-7-deazaguanine (preQ1). The protein is NADPH-dependent 7-cyano-7-deazaguanine reductase of Caldicellulosiruptor bescii (strain ATCC BAA-1888 / DSM 6725 / KCTC 15123 / Z-1320) (Anaerocellum thermophilum).